Reading from the N-terminus, the 361-residue chain is Outer mitochondrial transmembrane helix translocase (361 aa).

At 1 to 15 the chain is on the mitochondrial intermembrane side; it reads MVHAETFSRPLSRNE. The helical transmembrane segment at 16-32 threads the bilayer; that stretch reads VVGLIFRLTIFGAVTYF. Residues 33-361 are Cytoplasmic-facing; that stretch reads TIKWMVDAID…QNVLTHVCLD (329 aa). An ATP-binding site is contributed by 133-140; it reads GPPGCGKT. Ser-322 is subject to Phosphoserine.

It belongs to the AAA ATPase family. MSP1 subfamily. In terms of assembly, interacts with GRIA2 and GRIP1 in an ATP-dependent manner. ATAD1-catalyzed ATP hydrolysis disrupts not only its binding to GRIA2 and GRIP1, but also interaction between GRIP1 and GRIA2, leading to AMPAR complex disassembly.

It localises to the mitochondrion outer membrane. Its subcellular location is the peroxisome membrane. The protein resides in the postsynaptic cell membrane. It carries out the reaction [protein]-with a C-terminal TM segment(out) + ATP + H2O = [protein]-with a C-terminal TM segment(in) + ADP + phosphate + H(+). Functionally, outer mitochondrial translocase required to remove mislocalized tail-anchored transmembrane proteins on mitochondria. Specifically recognizes and binds tail-anchored transmembrane proteins: acts as a dislocase that mediates the ATP-dependent extraction of mistargeted tail-anchored transmembrane proteins from the mitochondrion outer membrane. Also plays a critical role in regulating the surface expression of AMPA receptors (AMPAR), thereby regulating synaptic plasticity and learning and memory. Required for NMDA-stimulated AMPAR internalization and inhibition of GRIA1 and GRIA2 recycling back to the plasma membrane; these activities are ATPase-dependent. The sequence is that of Outer mitochondrial transmembrane helix translocase from Bos taurus (Bovine).